The primary structure comprises 638 residues: Threonine--tRNA ligase (638 aa).

The 61-residue stretch at 1–61 (MPVITLPDGS…SVDGKLQIIT (61 aa)) folds into the TGS domain. The catalytic stretch occupies residues 243–534 (DHRKIGKTQD…LTEEYAGFFP (292 aa)). Residues Cys-334, His-385, and His-511 each coordinate Zn(2+).

The protein belongs to the class-II aminoacyl-tRNA synthetase family. As to quaternary structure, homodimer. It depends on Zn(2+) as a cofactor.

It localises to the cytoplasm. It carries out the reaction tRNA(Thr) + L-threonine + ATP = L-threonyl-tRNA(Thr) + AMP + diphosphate + H(+). In terms of biological role, catalyzes the attachment of threonine to tRNA(Thr) in a two-step reaction: L-threonine is first activated by ATP to form Thr-AMP and then transferred to the acceptor end of tRNA(Thr). Also edits incorrectly charged L-seryl-tRNA(Thr). The protein is Threonine--tRNA ligase of Hamiltonella defensa subsp. Acyrthosiphon pisum (strain 5AT).